The chain runs to 318 residues: Lymphatic vessel endothelial hyaluronic acid receptor 1 (318 aa).

The N-terminal stretch at 1-23 (MLQHTSLVLLLASIWTTRHPVQG) is a signal peptide. Residues 24-234 (ADLVQDLSIS…EAAGFGGVPT (211 aa)) are Extracellular-facing. The 91-residue stretch at 39-129 (GVALVGRNKN…SQKFKAYCHN (91 aa)) folds into the Link domain. The N-linked (GlcNAc...) asparagine glycan is linked to Asn-52. Cystine bridges form between Cys-60–Cys-127 and Cys-84–Cys-105. Asn-129 is a glycosylation site (N-linked (GlcNAc...) asparagine). Residues 235-255 (ALLVLALLFFGAAAVLAVCYV) form a helical membrane-spanning segment. The Cytoplasmic portion of the chain corresponds to 256–318 (KRYVKAFPFT…TTVRCLEAEV (63 aa)). Residues 284 to 305 (ADDVNANEESKKTIKNPEEAKS) show a composition bias toward basic and acidic residues. The segment at 284-318 (ADDVNANEESKKTIKNPEEAKSPPKTTVRCLEAEV) is disordered.

In terms of assembly, homodimer; disulfide-linked. Interacts with PDGFB and IGFBP3. Forms a transient ternary complex with PDGFB and PDGFRB in TGN. O-glycosylated.

Its subcellular location is the membrane. In terms of biological role, ligand-specific transporter trafficking between intracellular organelles (TGN) and the plasma membrane. Plays a role in autocrine regulation of cell growth mediated by growth regulators containing cell surface retention sequence binding (CRS). May act as a hyaluronan (HA) transporter, either mediating its uptake for catabolism within lymphatic endothelial cells themselves, or its transport into the lumen of afferent lymphatic vessels for subsequent re-uptake and degradation in lymph nodes. Binds to pericelluar hyaluronan matrices deposited on the surface of leukocytes and facilitates cell adhesion and migration through lymphatic endothelium. The polypeptide is Lymphatic vessel endothelial hyaluronic acid receptor 1 (Lyve1) (Mus musculus (Mouse)).